Here is a 101-residue protein sequence, read N- to C-terminus: Small ribosomal subunit protein uS14 (101 aa).

It belongs to the universal ribosomal protein uS14 family. In terms of assembly, part of the 30S ribosomal subunit. Contacts proteins S3 and S10.

Binds 16S rRNA, required for the assembly of 30S particles and may also be responsible for determining the conformation of the 16S rRNA at the A site. This chain is Small ribosomal subunit protein uS14, found in Stutzerimonas stutzeri (strain A1501) (Pseudomonas stutzeri).